The sequence spans 222 residues: Uracil-DNA glycosylase (222 aa).

D61 acts as the Proton acceptor in catalysis.

Belongs to the uracil-DNA glycosylase (UDG) superfamily. UNG family.

It is found in the cytoplasm. It catalyses the reaction Hydrolyzes single-stranded DNA or mismatched double-stranded DNA and polynucleotides, releasing free uracil.. Excises uracil residues from the DNA which can arise as a result of misincorporation of dUMP residues by DNA polymerase or due to deamination of cytosine. The polypeptide is Uracil-DNA glycosylase (Aeromonas hydrophila subsp. hydrophila (strain ATCC 7966 / DSM 30187 / BCRC 13018 / CCUG 14551 / JCM 1027 / KCTC 2358 / NCIMB 9240 / NCTC 8049)).